The primary structure comprises 183 residues: Translation initiation factor IF-3 (183 aa).

Belongs to the IF-3 family. Monomer.

It is found in the cytoplasm. In terms of biological role, IF-3 binds to the 30S ribosomal subunit and shifts the equilibrium between 70S ribosomes and their 50S and 30S subunits in favor of the free subunits, thus enhancing the availability of 30S subunits on which protein synthesis initiation begins. This Serratia marcescens protein is Translation initiation factor IF-3.